The chain runs to 493 residues: UDP-N-acetylmuramoyl-L-alanyl-D-glutamate--2,6-diaminopimelate ligase (493 aa).

Residue Ser30 participates in UDP-N-acetyl-alpha-D-muramoyl-L-alanyl-D-glutamate binding. 114 to 120 (GTNGKTS) lines the ATP pocket. UDP-N-acetyl-alpha-D-muramoyl-L-alanyl-D-glutamate contacts are provided by residues 156-157 (TT), Ser183, Gln189, and Arg191. Residue Lys223 is modified to N6-carboxylysine. Residues Arg386, 410 to 413 (DNPR), Gly460, and Glu464 contribute to the meso-2,6-diaminopimelate site. Residues 410 to 413 (DNPR) carry the Meso-diaminopimelate recognition motif motif.

Belongs to the MurCDEF family. MurE subfamily. Mg(2+) serves as cofactor. Post-translationally, carboxylation is probably crucial for Mg(2+) binding and, consequently, for the gamma-phosphate positioning of ATP.

Its subcellular location is the cytoplasm. The catalysed reaction is UDP-N-acetyl-alpha-D-muramoyl-L-alanyl-D-glutamate + meso-2,6-diaminopimelate + ATP = UDP-N-acetyl-alpha-D-muramoyl-L-alanyl-gamma-D-glutamyl-meso-2,6-diaminopimelate + ADP + phosphate + H(+). It participates in cell wall biogenesis; peptidoglycan biosynthesis. In terms of biological role, catalyzes the addition of meso-diaminopimelic acid to the nucleotide precursor UDP-N-acetylmuramoyl-L-alanyl-D-glutamate (UMAG) in the biosynthesis of bacterial cell-wall peptidoglycan. This chain is UDP-N-acetylmuramoyl-L-alanyl-D-glutamate--2,6-diaminopimelate ligase, found in Chromobacterium violaceum (strain ATCC 12472 / DSM 30191 / JCM 1249 / CCUG 213 / NBRC 12614 / NCIMB 9131 / NCTC 9757 / MK).